Reading from the N-terminus, the 126-residue chain is Large ribosomal subunit protein bL12 (126 aa).

It belongs to the bacterial ribosomal protein bL12 family. As to quaternary structure, homodimer. Part of the ribosomal stalk of the 50S ribosomal subunit. Forms a multimeric L10(L12)X complex, where L10 forms an elongated spine to which 2 to 4 L12 dimers bind in a sequential fashion. Binds GTP-bound translation factors.

In terms of biological role, forms part of the ribosomal stalk which helps the ribosome interact with GTP-bound translation factors. Is thus essential for accurate translation. The chain is Large ribosomal subunit protein bL12 from Tropheryma whipplei (strain TW08/27) (Whipple's bacillus).